Here is a 328-residue protein sequence, read N- to C-terminus: Phosphate acyltransferase (328 aa).

Belongs to the PlsX family. In terms of assembly, homodimer. Probably interacts with PlsY.

It is found in the cytoplasm. It catalyses the reaction a fatty acyl-[ACP] + phosphate = an acyl phosphate + holo-[ACP]. It functions in the pathway lipid metabolism; phospholipid metabolism. In terms of biological role, catalyzes the reversible formation of acyl-phosphate (acyl-PO(4)) from acyl-[acyl-carrier-protein] (acyl-ACP). This enzyme utilizes acyl-ACP as fatty acyl donor, but not acyl-CoA. The protein is Phosphate acyltransferase of Campylobacter jejuni subsp. jejuni serotype O:6 (strain 81116 / NCTC 11828).